The chain runs to 29 residues: Small toxic protein ZorP (29 aa).

The chain crosses the membrane as a helical span at residues 10–27; the sequence is VLIAVLELLVALLRLIDL.

It localises to the membrane. Functionally, toxic component of a type I toxin-antitoxin (TA) system. Overexpression leads to cell stasis and a decrease in colony-forming units. Probably repressed by cognate small RNA orzP. Base pairing occurs between 18 bases in the 5' UTR of zorP mRNA and the 5' end of OrzP sRNA. In Escherichia coli O157:H7, this protein is Small toxic protein ZorP.